The sequence spans 727 residues: Sodium-dependent neutral amino acid transporter SLC6A17 (727 aa).

Topologically, residues 1–68 (MPKNSKVTQR…DRPAWNSKLQ (68 aa)) are cytoplasmic. A phosphoserine mark is found at Ser13 and Ser20. Residues 69–89 (YILAQIGFSVGLGNIWRFPYL) form a helical membrane-spanning segment. The Extracellular segment spans residues 90 to 96 (CQKNGGG). Residues 97 to 116 (AYLVPYLVLLIIIGIPLFFL) form a helical membrane-spanning segment. Residues 117–140 (ELAVGQRIRRGSIGVWHYVCPRLG) are Cytoplasmic-facing. Residues 141-161 (GIGFSSCIVCLFVGLYYNVII) traverse the membrane as a helical segment. Over 162 to 224 (GWSVFYFFKS…NSISESGGLN (63 aa)) the chain is Extracellular. A glycan (N-linked (GlcNAc...) asparagine) is linked at Asn186. Residues 225-243 (WKMTVCLLVAWSIVGMAVV) traverse the membrane as a helical segment. Residues 244–251 (KGIQSSGK) are Cytoplasmic-facing. Residues 252-269 (VMYFSSLFPYVVLACFLV) traverse the membrane as a helical segment. Residues 270-304 (RGLLLRGAVDGILHMFTPKLDKMLDPQVWREAATQ) are Extracellular-facing. A helical transmembrane segment spans residues 305–322 (VFFALGLGFGGVIAFSSY). Residues 323–333 (NKQDNNCHFDA) lie on the Cytoplasmic side of the membrane. Residues 334–355 (ALVSFINFFTSVLATLVVFAVL) traverse the membrane as a helical segment. Residues 356–451 (GFKANIMNEK…FIAFTEAMTH (96 aa)) are Extracellular-facing. Position 377 is a phosphotyrosine (Tyr377). N-linked (GlcNAc...) asparagine glycosylation occurs at Asn393. A helical membrane pass occupies residues 452-471 (FPASPFWSVMFFLMLINLGL). Residues 472-494 (GSMIGTMAGITTPIIDTFKVPKE) lie on the Cytoplasmic side of the membrane. The chain crosses the membrane as a helical span at residues 495 to 513 (MFTVGCCVFAFFVGLLFVQ). The Extracellular segment spans residues 514–528 (RSGNYFVTMFDDYSA). The helical transmembrane segment at 529–549 (TLPLTVIVILENIAVAWIYGT) threads the bilayer. The Cytoplasmic portion of the chain corresponds to 550 to 569 (KKFMQELTEMLGFRPYRFYF). The helical transmembrane segment at 570-591 (YMWKFVSPLCMAVLTTASIIQL) threads the bilayer. Topologically, residues 592 to 618 (GVSPPGYSAWIKEEAAERYLYFPNWAM) are extracellular. A helical membrane pass occupies residues 619–641 (ALLITLIAVATLPIPVVFILRHF). Residues 642–727 (HLLSDGSNTL…LLASTPESEL (86 aa)) are Cytoplasmic-facing. Residues Ser665 and Ser701 each carry the phosphoserine modification. The interval 680–727 (VPSEAPSPMPTHRSYLGPGSTSPLESSSHPNGRYGSGYLLASTPESEL) is disordered. Residues 698 to 709 (GSTSPLESSSHP) are compositionally biased toward polar residues.

It belongs to the sodium:neurotransmitter symporter (SNF) (TC 2.A.22) family. As to expression, found exclusively in the central nervous system and is more abundant in the cerebellum and the cerebral cortex. Expressed in PC-12 cell line.

It localises to the cytoplasmic vesicle. Its subcellular location is the secretory vesicle. The protein localises to the synaptic vesicle membrane. It is found in the postsynapse. The protein resides in the presynapse. The catalysed reaction is L-proline(in) + Na(+)(in) = L-proline(out) + Na(+)(out). It catalyses the reaction L-leucine(in) + Na(+)(in) = L-leucine(out) + Na(+)(out). It carries out the reaction glycine(in) + Na(+)(in) = glycine(out) + Na(+)(out). The enzyme catalyses L-alanine(in) + Na(+)(in) = L-alanine(out) + Na(+)(out). The catalysed reaction is L-glutamine(in) + Na(+)(in) = L-glutamine(out) + Na(+)(out). In terms of biological role, synaptic vesicle transporter with apparent selectivity for neutral amino acids. The transport is sodium-coupled but chloride-independent, likely driven by the proton electrochemical gradient generated by vacuolar H(+)-ATPase in an overall electrogenic mechanism. May contribute to the synaptic uptake of neurotransmitter precursors in a process coupled in part to vesicle exocytosis. In Rattus norvegicus (Rat), this protein is Sodium-dependent neutral amino acid transporter SLC6A17.